A 371-amino-acid polypeptide reads, in one-letter code: Ferrochelatase (371 aa).

Fe cation contacts are provided by His-218 and Glu-299.

The protein belongs to the ferrochelatase family.

The protein localises to the cytoplasm. It carries out the reaction heme b + 2 H(+) = protoporphyrin IX + Fe(2+). Its pathway is porphyrin-containing compound metabolism; protoheme biosynthesis; protoheme from protoporphyrin-IX: step 1/1. Its function is as follows. Catalyzes the ferrous insertion into protoporphyrin IX. This is Ferrochelatase from Cupriavidus taiwanensis (strain DSM 17343 / BCRC 17206 / CCUG 44338 / CIP 107171 / LMG 19424 / R1) (Ralstonia taiwanensis (strain LMG 19424)).